The chain runs to 246 residues: Anionic trypsin-2 (246 aa).

Positions 1–15 are cleaved as a signal peptide; sequence MSALLILALVGAAVA. Positions 16 to 23 are cleaved as a propeptide — activation peptide; it reads FPVDDDDK. The Peptidase S1 domain occupies 24–244; sequence IVGGYTCRES…YVDWIQNTIA (221 aa). 6 disulfides stabilise this stretch: C30–C160, C48–C64, C132–C233, C139–C206, C171–C185, and C196–C220. Catalysis depends on H63, which acts as the Charge relay system. 4 residues coordinate Ca(2+): E75, N77, V80, and E85. D107 functions as the Charge relay system in the catalytic mechanism. S200 functions as the Charge relay system in the catalytic mechanism.

It belongs to the peptidase S1 family. It depends on Ca(2+) as a cofactor. As to expression, expressed in the pancreas, lung and kidney.

The protein localises to the secreted. It is found in the extracellular space. It carries out the reaction Preferential cleavage: Arg-|-Xaa, Lys-|-Xaa.. This Mus musculus (Mouse) protein is Anionic trypsin-2 (Prss2).